Reading from the N-terminus, the 127-residue chain is Protein translocase subunit SecE (127 aa).

3 consecutive transmembrane segments (helical) span residues 16-36 (IAKW…NHYY), 42-62 (IFQN…IFLT), and 98-118 (IIVT…LIWF).

The protein belongs to the SecE/SEC61-gamma family. Component of the Sec protein translocase complex. Heterotrimer consisting of SecY, SecE and SecG subunits. The heterotrimers can form oligomers, although 1 heterotrimer is thought to be able to translocate proteins. Interacts with the ribosome. Interacts with SecDF, and other proteins may be involved. Interacts with SecA.

Its subcellular location is the cell membrane. Essential subunit of the Sec protein translocation channel SecYEG. Clamps together the 2 halves of SecY. May contact the channel plug during translocation. In Buchnera aphidicola subsp. Baizongia pistaciae (strain Bp), this protein is Protein translocase subunit SecE.